Here is a 302-residue protein sequence, read N- to C-terminus: Homoserine O-acetyltransferase (302 aa).

Residue cysteine 142 is the Acyl-thioester intermediate of the active site. Residues lysine 163 and serine 192 each contribute to the substrate site. The active-site Proton acceptor is the histidine 235. The active site involves glutamate 237. Residue arginine 249 participates in substrate binding.

It belongs to the MetA family.

The protein localises to the cytoplasm. The catalysed reaction is L-homoserine + acetyl-CoA = O-acetyl-L-homoserine + CoA. It participates in amino-acid biosynthesis; L-methionine biosynthesis via de novo pathway; O-acetyl-L-homoserine from L-homoserine: step 1/1. Its function is as follows. Transfers an acetyl group from acetyl-CoA to L-homoserine, forming acetyl-L-homoserine. The sequence is that of Homoserine O-acetyltransferase from Bacillus licheniformis (strain ATCC 14580 / DSM 13 / JCM 2505 / CCUG 7422 / NBRC 12200 / NCIMB 9375 / NCTC 10341 / NRRL NRS-1264 / Gibson 46).